Consider the following 1842-residue polypeptide: Plexin-B2 (1842 aa).

The N-terminal stretch at 1 to 19 (MALPLWALTFLGLTGLGLS) is a signal peptide. The 449-residue stretch at 20–468 (LRSRKPESFR…TQDKVFRLPV (449 aa)) folds into the Sema domain. At 20-1201 (LRSRKPESFR…EYDTRASDVP (1182 aa)) the chain is on the extracellular side. 2 disulfides stabilise this stretch: Cys-78–Cys-87 and Cys-112–Cys-120. 2 N-linked (GlcNAc...) asparagine glycosylation sites follow: Asn-127 and Asn-242. 3 disulfides stabilise this stretch: Cys-250-Cys-366, Cys-266-Cys-313, and Cys-331-Cys-353. N-linked (GlcNAc...) asparagine glycosylation is found at Asn-393 and Asn-451. 5 disulfides stabilise this stretch: Cys-471–Cys-488, Cys-477–Cys-520, Cys-480–Cys-497, Cys-491–Cys-503, and Cys-557–Cys-576. Asn-798 carries N-linked (GlcNAc...) asparagine glycosylation. IPT/TIG domains follow at residues 806 to 895 (PVIT…QFTY), 898 to 982 (PQPL…SFTY), and 986 to 1095 (PMIR…VFEY). Residues Asn-919, Asn-1053, and Asn-1072 are each glycosylated (N-linked (GlcNAc...) asparagine). The helical transmembrane segment at 1202-1222 (LSLILPLVMVPMVFIIVVSIY) threads the bilayer. Residues 1223 to 1842 (CYWRKSQQAE…AALENKVTDL (620 aa)) are Cytoplasmic-facing. A phosphoserine mark is found at Ser-1240, Ser-1248, and Ser-1574.

This sequence belongs to the plexin family. In terms of assembly, monomer, and heterodimer with PLXNB1. Interacts with MET, ARHGEF11 and ARHGEF12. May also interact with MST1R. As to expression, detected in macrophages from spleen and bone marrow (at protein level). Detected in granule cells in the developing cerebellum, dentate gyrus and olfactory bulb. Expressed in neurons and glia in the developing hippocampus.

It is found in the cell membrane. Functionally, cell surface receptor for SEMA4C, SEMA4D and SEMA4G that plays an important role in cell-cell signaling. Plays a role in glutamatergic synapse development and is required for SEMA4A-mediated excitatory synapse development. Binding to class 4 semaphorins promotes downstream activation of RHOA and phosphorylation of ERBB2 at 'Tyr-1248'. Also acts as a cell surface receptor for angiogenin (ANG); promoting ANG endocytosis and translocation to the cytoplasm or nucleus. Required for normal differentiation and migration of neuronal cells during brain corticogenesis and for normal embryonic brain development. Regulates the migration of cerebellar granule cells in the developing brain. Plays a role in RHOA activation and subsequent changes of the actin cytoskeleton. Plays a role in axon guidance, invasive growth and cell migration. May modulate the activity of RAC1 and CDC42. Down-regulates macrophage migration in wound-healing assays (in vitro). The chain is Plexin-B2 from Mus musculus (Mouse).